An 847-amino-acid chain; its full sequence is Follistatin-related protein 5 (847 aa).

The signal sequence occupies residues 1-20 (MFRCWSAILILGFIFLASEG). The 55-residue stretch at 81 to 135 (ETRHAECACMDLCKQHYKPVCGSDGEFYENHCEVHRAACLKKQKITIVHNEDCFF) folds into the Kazal-like domain. Intrachain disulfides connect C87/C119, C93/C112, and C101/C133. EF-hand domains follow at residues 175 to 210 (RKKP…EELN) and 211 to 246 (KDLS…QVIQ). Residues D188, D190, N192, E199, D226, N228, D230, H232, and E237 each coordinate Ca(2+). Ig-like domains lie at 250–338 (PEDQ…FQVN) and 341–426 (PVIR…EDIS). 2 cysteine pairs are disulfide-bonded: C270–C321 and C362–C413. N-linked (GlcNAc...) asparagine glycans are attached at residues N318 and N394.

It is found in the secreted. In Mus musculus (Mouse), this protein is Follistatin-related protein 5 (Fstl5).